The primary structure comprises 299 residues: UDP-N-acetylenolpyruvoylglucosamine reductase (299 aa).

Residues R29–A193 enclose the FAD-binding PCMH-type domain. R173 is a catalytic residue. The active-site Proton donor is the S222. The active site involves E292.

The protein belongs to the MurB family. FAD is required as a cofactor.

It is found in the cytoplasm. The catalysed reaction is UDP-N-acetyl-alpha-D-muramate + NADP(+) = UDP-N-acetyl-3-O-(1-carboxyvinyl)-alpha-D-glucosamine + NADPH + H(+). It functions in the pathway cell wall biogenesis; peptidoglycan biosynthesis. In terms of biological role, cell wall formation. The polypeptide is UDP-N-acetylenolpyruvoylglucosamine reductase (Syntrophotalea carbinolica (strain DSM 2380 / NBRC 103641 / GraBd1) (Pelobacter carbinolicus)).